A 303-amino-acid chain; its full sequence is ATP phosphoribosyltransferase (303 aa).

Belongs to the ATP phosphoribosyltransferase family. Long subfamily. Mg(2+) serves as cofactor.

Its subcellular location is the cytoplasm. It carries out the reaction 1-(5-phospho-beta-D-ribosyl)-ATP + diphosphate = 5-phospho-alpha-D-ribose 1-diphosphate + ATP. It functions in the pathway amino-acid biosynthesis; L-histidine biosynthesis; L-histidine from 5-phospho-alpha-D-ribose 1-diphosphate: step 1/9. Feedback inhibited by histidine. In terms of biological role, catalyzes the condensation of ATP and 5-phosphoribose 1-diphosphate to form N'-(5'-phosphoribosyl)-ATP (PR-ATP). Has a crucial role in the pathway because the rate of histidine biosynthesis seems to be controlled primarily by regulation of HisG enzymatic activity. This chain is ATP phosphoribosyltransferase, found in Haemophilus influenzae (strain PittEE).